The primary structure comprises 464 residues: UDP-N-acetylmuramate--L-alanine ligase (464 aa).

ATP is bound at residue 123–129 (GTHGKTT).

This sequence belongs to the MurCDEF family.

The protein resides in the cytoplasm. The enzyme catalyses UDP-N-acetyl-alpha-D-muramate + L-alanine + ATP = UDP-N-acetyl-alpha-D-muramoyl-L-alanine + ADP + phosphate + H(+). Its pathway is cell wall biogenesis; peptidoglycan biosynthesis. In terms of biological role, cell wall formation. This chain is UDP-N-acetylmuramate--L-alanine ligase, found in Carboxydothermus hydrogenoformans (strain ATCC BAA-161 / DSM 6008 / Z-2901).